A 140-amino-acid polypeptide reads, in one-letter code: Nucleoside diphosphate kinase (140 aa).

Lys11, Phe59, Arg87, Thr93, Arg104, and Asn114 together coordinate ATP. The active-site Pros-phosphohistidine intermediate is His117.

This sequence belongs to the NDK family. Homotetramer. Mg(2+) serves as cofactor.

The protein localises to the cytoplasm. The catalysed reaction is a 2'-deoxyribonucleoside 5'-diphosphate + ATP = a 2'-deoxyribonucleoside 5'-triphosphate + ADP. The enzyme catalyses a ribonucleoside 5'-diphosphate + ATP = a ribonucleoside 5'-triphosphate + ADP. Functionally, major role in the synthesis of nucleoside triphosphates other than ATP. The ATP gamma phosphate is transferred to the NDP beta phosphate via a ping-pong mechanism, using a phosphorylated active-site intermediate. This Acidiphilium cryptum (strain JF-5) protein is Nucleoside diphosphate kinase.